The primary structure comprises 327 residues: Regulatory protein MsrR (327 aa).

Residues 1–18 (MDKETNDNEYRRQSEHRT) show a composition bias toward basic and acidic residues. A disordered region spans residues 1 to 24 (MDKETNDNEYRRQSEHRTSAPKRK). The Cytoplasmic portion of the chain corresponds to 1–31 (MDKETNDNEYRRQSEHRTSAPKRKKKKKIRK). A helical; Signal-anchor for type II membrane protein membrane pass occupies residues 32-52 (LPIILLIVVILLIALVVYIVH). At 53-327 (SYNSGVEYAK…QAIKDFLDED (275 aa)) the chain is on the extracellular side.

Belongs to the LytR/CpsA/Psr (LCP) family.

The protein localises to the cell membrane. Involved in SarA attenuation. Affects resistance to oxacillin and teicoplanin, as well as the synthesis of virulence factors. The polypeptide is Regulatory protein MsrR (msrR) (Staphylococcus aureus (strain NCTC 8325 / PS 47)).